Reading from the N-terminus, the 385-residue chain is Probable tRNA sulfurtransferase (385 aa).

The 104-residue stretch at 57–160 (DGVIERVKKV…RGNAYVFTDK (104 aa)) folds into the THUMP domain. ATP contacts are provided by residues 180–181 (ML), 205–206 (YY), Arg262, Gly284, and Gln293.

The protein belongs to the ThiI family.

It is found in the cytoplasm. It catalyses the reaction [ThiI sulfur-carrier protein]-S-sulfanyl-L-cysteine + a uridine in tRNA + 2 reduced [2Fe-2S]-[ferredoxin] + ATP + H(+) = [ThiI sulfur-carrier protein]-L-cysteine + a 4-thiouridine in tRNA + 2 oxidized [2Fe-2S]-[ferredoxin] + AMP + diphosphate. The enzyme catalyses [ThiS sulfur-carrier protein]-C-terminal Gly-Gly-AMP + S-sulfanyl-L-cysteinyl-[cysteine desulfurase] + AH2 = [ThiS sulfur-carrier protein]-C-terminal-Gly-aminoethanethioate + L-cysteinyl-[cysteine desulfurase] + A + AMP + 2 H(+). It participates in cofactor biosynthesis; thiamine diphosphate biosynthesis. Its function is as follows. Catalyzes the ATP-dependent transfer of a sulfur to tRNA to produce 4-thiouridine in position 8 of tRNAs, which functions as a near-UV photosensor. Also catalyzes the transfer of sulfur to the sulfur carrier protein ThiS, forming ThiS-thiocarboxylate. This is a step in the synthesis of thiazole, in the thiamine biosynthesis pathway. The sulfur is donated as persulfide by IscS. This is Probable tRNA sulfurtransferase from Clostridium perfringens (strain 13 / Type A).